The chain runs to 404 residues: Phosphoglycerate kinase (404 aa).

Substrate contacts are provided by residues 22–24 (DLN), Arg-37, 60–63 (HLGR), Arg-119, and Arg-156. Residues Lys-206, Gly-302, Glu-333, and 359 to 362 (GGDS) each bind ATP.

Belongs to the phosphoglycerate kinase family. As to quaternary structure, monomer.

Its subcellular location is the cytoplasm. It catalyses the reaction (2R)-3-phosphoglycerate + ATP = (2R)-3-phospho-glyceroyl phosphate + ADP. The protein operates within carbohydrate degradation; glycolysis; pyruvate from D-glyceraldehyde 3-phosphate: step 2/5. The protein is Phosphoglycerate kinase of Clavibacter michiganensis subsp. michiganensis (strain NCPPB 382).